A 375-amino-acid chain; its full sequence is Alcohol dehydrogenase class-3 chain H (375 aa).

Residue A1 is modified to N-acetylalanine. Residues C46, H68, C98, C101, C104, C112, and C175 each coordinate Zn(2+).

Belongs to the zinc-containing alcohol dehydrogenase family. Class-III subfamily. In terms of assembly, homodimer or heterodimer with L chain. It depends on Zn(2+) as a cofactor.

It is found in the cytoplasm. The enzyme catalyses a primary alcohol + NAD(+) = an aldehyde + NADH + H(+). It carries out the reaction a secondary alcohol + NAD(+) = a ketone + NADH + H(+). The catalysed reaction is S-(hydroxymethyl)glutathione + NADP(+) = S-formylglutathione + NADPH + H(+). It catalyses the reaction S-(hydroxymethyl)glutathione + NAD(+) = S-formylglutathione + NADH + H(+). Class-III ADH is remarkably ineffective in oxidizing ethanol, but it readily catalyzes the oxidation of long-chain primary alcohols and the oxidation of S-(hydroxymethyl) glutathione. The polypeptide is Alcohol dehydrogenase class-3 chain H (Gadus morhua (Atlantic cod)).